A 419-amino-acid polypeptide reads, in one-letter code: L-cysteine:1D-myo-inositol 2-amino-2-deoxy-alpha-D-glucopyranoside ligase (419 aa).

Residues 1–20 are disordered; it reads MRSWSVPEVPALPGRGPRVH. Zn(2+) is bound at residue C44. L-cysteinyl-5'-AMP-binding positions include 44 to 47, T59, and 82 to 84; these read CGIT and NVT. The 'HIGH' region signature appears at 46–56; that stretch reads ITPYDATHLGH. The short motif at 191 to 196 is the 'ERGGDP' region element; the sequence is ERGGDP. L-cysteinyl-5'-AMP is bound at residue W232. Residue C236 coordinates Zn(2+). Residue 254–256 participates in L-cysteinyl-5'-AMP binding; it reads GSD. H261 contacts Zn(2+). V289 lines the L-cysteinyl-5'-AMP pocket. The 'KMSKS' region motif lies at 295–299; that stretch reads KMSKS.

This sequence belongs to the class-I aminoacyl-tRNA synthetase family. MshC subfamily. In terms of assembly, monomer. Zn(2+) is required as a cofactor.

It catalyses the reaction 1D-myo-inositol 2-amino-2-deoxy-alpha-D-glucopyranoside + L-cysteine + ATP = 1D-myo-inositol 2-(L-cysteinylamino)-2-deoxy-alpha-D-glucopyranoside + AMP + diphosphate + H(+). Its function is as follows. Catalyzes the ATP-dependent condensation of GlcN-Ins and L-cysteine to form L-Cys-GlcN-Ins. The sequence is that of L-cysteine:1D-myo-inositol 2-amino-2-deoxy-alpha-D-glucopyranoside ligase from Kineococcus radiotolerans (strain ATCC BAA-149 / DSM 14245 / SRS30216).